Consider the following 80-residue polypeptide: Conotoxin SmIVB (80 aa).

An N-terminal signal peptide occupies residues 1 to 21 (MGMRMMFTVFLLVVLATTVVS). A propeptide spanning residues 22–38 (IPSDRASDGRNAEVNER) is cleaved from the precursor. P40 carries the 4-hydroxyproline modification. S45 carries O-linked (HexNAc...) serine glycosylation. P55, P60, P61, P70, and P72 each carry 4-hydroxyproline. Serine amide is present on S75. Residues 76-80 (GRRNH) constitute a propeptide that is removed on maturation.

The protein belongs to the conotoxin A superfamily. Post-translationally, contains 3 disulfide bonds. Expressed by the venom duct.

The protein localises to the secreted. In terms of biological role, neurotoxin with probable activity on sodium channel. Induces intense repetitive firing of the frog neuromuscular junction, leading to a tetanic contracture in muscle fiber (spastic paralysis). In vivo, shows the same effect as the whole venom when injected on fish prey. This is Conotoxin SmIVB from Conus stercusmuscarum (Fly-specked cone).